Consider the following 342-residue polypeptide: Dihydroorotate dehydrogenase (quinone) (342 aa).

FMN is bound by residues Ala60 to Lys64 and Thr84. Lys64 provides a ligand contact to substrate. Asn109–Phe113 is a binding site for substrate. FMN contacts are provided by Asn137 and Asn170. Asn170 serves as a coordination point for substrate. Residue Ser173 is the Nucleophile of the active site. Substrate is bound at residue Asn175. Residues Lys215 and Thr243 each contribute to the FMN site. Asn244–Thr245 is a binding site for substrate. FMN is bound by residues Gly266, Gly295, and Tyr316–Ser317.

The protein belongs to the dihydroorotate dehydrogenase family. Type 2 subfamily. Monomer. The cofactor is FMN.

It localises to the cell membrane. The catalysed reaction is (S)-dihydroorotate + a quinone = orotate + a quinol. Its pathway is pyrimidine metabolism; UMP biosynthesis via de novo pathway; orotate from (S)-dihydroorotate (quinone route): step 1/1. Functionally, catalyzes the conversion of dihydroorotate to orotate with quinone as electron acceptor. In Nitrosomonas eutropha (strain DSM 101675 / C91 / Nm57), this protein is Dihydroorotate dehydrogenase (quinone).